The sequence spans 594 residues: DNA ligase (594 aa).

E280 is a binding site for ATP. K282 functions as the N6-AMP-lysine intermediate in the catalytic mechanism. R287, R316, E345, F385, R456, and K462 together coordinate ATP.

The protein belongs to the ATP-dependent DNA ligase family. The cofactor is Mg(2+).

The enzyme catalyses ATP + (deoxyribonucleotide)n-3'-hydroxyl + 5'-phospho-(deoxyribonucleotide)m = (deoxyribonucleotide)n+m + AMP + diphosphate.. DNA ligase that seals nicks in double-stranded DNA during DNA replication, DNA recombination and DNA repair. This Halorubrum lacusprofundi (strain ATCC 49239 / DSM 5036 / JCM 8891 / ACAM 34) protein is DNA ligase.